The chain runs to 445 residues: Glycine--tRNA ligase (445 aa).

2 residues coordinate substrate: arginine 97 and glutamate 145. ATP-binding positions include arginine 177–glutamate 179, phenylalanine 187–phenylalanine 192, glutamate 262–valine 263, and glycine 308–arginine 311. Phenylalanine 192–glutamate 196 contributes to the substrate binding site. Glutamate 304–glycine 308 contacts substrate.

Belongs to the class-II aminoacyl-tRNA synthetase family. As to quaternary structure, homodimer.

The protein localises to the cytoplasm. The enzyme catalyses tRNA(Gly) + glycine + ATP = glycyl-tRNA(Gly) + AMP + diphosphate. Its function is as follows. Catalyzes the attachment of glycine to tRNA(Gly). This Borrelia garinii subsp. bavariensis (strain ATCC BAA-2496 / DSM 23469 / PBi) (Borreliella bavariensis) protein is Glycine--tRNA ligase.